A 122-amino-acid chain; its full sequence is Sterile alpha motif domain-containing protein 13 (122 aa).

Residues 51–119 (WAVMDVVNYF…KPLQTKHLKN (69 aa)) form the SAM domain.

The protein is Sterile alpha motif domain-containing protein 13 (SAMD13) of Homo sapiens (Human).